A 327-amino-acid chain; its full sequence is MRPPGFWSRPPTHPLARLLAPAGRVYGGLTANRMDRPGATPPCPVLCVGNFTLGGAGKTPTALSLVRLLRELGRTPALLSRGYGGRLAGPLVVDPARHAAAEVGDEPLLLAQAAPTIVARDRPAGARLCAASGADVIVMDDGLQNPSLTKTLSLAVVDGGAGLGNGLPFPAGPLRAPLARQWPHVAGLVLVGEGGPGEAMAAEAERRGLPVHRARLVPETGSDWAGRRVVAFAGIGRPQKFFETLRSLGAEIVAEGAFPDHHPYRPGDWTALSALAAREGASLVTTEKDAVRLPAEARAVVDVLRVTLAFANETRLRQQLAAAFPHA.

52–59 (TLGGAGKT) contacts ATP.

The protein belongs to the LpxK family.

It catalyses the reaction a lipid A disaccharide + ATP = a lipid IVA + ADP + H(+). It functions in the pathway glycolipid biosynthesis; lipid IV(A) biosynthesis; lipid IV(A) from (3R)-3-hydroxytetradecanoyl-[acyl-carrier-protein] and UDP-N-acetyl-alpha-D-glucosamine: step 6/6. Transfers the gamma-phosphate of ATP to the 4'-position of a tetraacyldisaccharide 1-phosphate intermediate (termed DS-1-P) to form tetraacyldisaccharide 1,4'-bis-phosphate (lipid IVA). The sequence is that of Tetraacyldisaccharide 4'-kinase from Methylorubrum extorquens (strain PA1) (Methylobacterium extorquens).